We begin with the raw amino-acid sequence, 255 residues long: 5-oxoprolinase subunit A (255 aa).

It belongs to the LamB/PxpA family. As to quaternary structure, forms a complex composed of PxpA, PxpB and PxpC.

It carries out the reaction 5-oxo-L-proline + ATP + 2 H2O = L-glutamate + ADP + phosphate + H(+). Its function is as follows. Catalyzes the cleavage of 5-oxoproline to form L-glutamate coupled to the hydrolysis of ATP to ADP and inorganic phosphate. The protein is 5-oxoprolinase subunit A of Campylobacter jejuni subsp. jejuni serotype O:2 (strain ATCC 700819 / NCTC 11168).